Here is a 627-residue protein sequence, read N- to C-terminus: 1-deoxy-D-xylulose-5-phosphate synthase (627 aa).

Thiamine diphosphate-binding positions include His76 and 117 to 119; that span reads SHA. Position 148 (Asp148) interacts with Mg(2+). Residues 149–150, Asn178, Phe288, and Glu370 each bind thiamine diphosphate; that span reads GA. Asn178 serves as a coordination point for Mg(2+).

The protein belongs to the transketolase family. DXPS subfamily. In terms of assembly, homodimer. The cofactor is Mg(2+). Thiamine diphosphate serves as cofactor.

It carries out the reaction D-glyceraldehyde 3-phosphate + pyruvate + H(+) = 1-deoxy-D-xylulose 5-phosphate + CO2. Its pathway is metabolic intermediate biosynthesis; 1-deoxy-D-xylulose 5-phosphate biosynthesis; 1-deoxy-D-xylulose 5-phosphate from D-glyceraldehyde 3-phosphate and pyruvate: step 1/1. Functionally, catalyzes the acyloin condensation reaction between C atoms 2 and 3 of pyruvate and glyceraldehyde 3-phosphate to yield 1-deoxy-D-xylulose-5-phosphate (DXP). The polypeptide is 1-deoxy-D-xylulose-5-phosphate synthase (Cutibacterium acnes (strain DSM 16379 / KPA171202) (Propionibacterium acnes)).